The following is a 190-amino-acid chain: Calcium-binding protein NCS-1 (190 aa).

Gly-2 carries the N-myristoyl glycine lipid modification. 4 consecutive EF-hand domains span residues 40 to 58 (SGHL…FFPF), 60 to 95 (DPSA…TSRG), 96 to 131 (ELND…IYKM), and 144 to 179 (TPEK…DPTI). Ca(2+) is bound by residues Asp-73, Asp-75, Asn-77, Tyr-79, Glu-84, Asp-109, Asp-111, Asn-113, Glu-120, Asp-157, Asn-159, Asp-161, Gln-163, and Glu-168.

Belongs to the recoverin family.

The protein resides in the membrane. Its function is as follows. Negatively regulates sporulation perhaps by controlling Ca(2+)-dependent desensitization of git3. The chain is Calcium-binding protein NCS-1 (ncs1) from Schizosaccharomyces pombe (strain 972 / ATCC 24843) (Fission yeast).